A 207-amino-acid chain; its full sequence is Octanoyltransferase (207 aa).

In terms of domain architecture, BPL/LPL catalytic spans 29-204; it reads DDTADELWLV…ELMVQLGDEE (176 aa). Residues 68 to 75, 135 to 137, and 148 to 150 each bind substrate; these read RGGQVTYH, SLG, and GVA. Cys-166 (acyl-thioester intermediate) is an active-site residue.

Belongs to the LipB family.

The protein resides in the cytoplasm. The enzyme catalyses octanoyl-[ACP] + L-lysyl-[protein] = N(6)-octanoyl-L-lysyl-[protein] + holo-[ACP] + H(+). Its pathway is protein modification; protein lipoylation via endogenous pathway; protein N(6)-(lipoyl)lysine from octanoyl-[acyl-carrier-protein]: step 1/2. Functionally, catalyzes the transfer of endogenously produced octanoic acid from octanoyl-acyl-carrier-protein onto the lipoyl domains of lipoate-dependent enzymes. Lipoyl-ACP can also act as a substrate although octanoyl-ACP is likely to be the physiological substrate. The sequence is that of Octanoyltransferase from Methylococcus capsulatus (strain ATCC 33009 / NCIMB 11132 / Bath).